Reading from the N-terminus, the 716-residue chain is ATP-dependent DNA helicase DinG (716 aa).

Positions alanine 17–threonine 294 constitute a Helicase ATP-binding domain. Alanine 54–threonine 61 lines the ATP pocket. [4Fe-4S] cluster is bound at residue cysteine 120. The DEAH box motif lies at glutamate 131–glutamine 134. Residues cysteine 194, cysteine 199, and cysteine 205 each coordinate [4Fe-4S] cluster. The DEAH box signature appears at aspartate 248–histidine 251. Residues alanine 487 to proline 698 form the Helicase C-terminal domain.

Belongs to the helicase family. DinG subfamily. Type 1 sub-subfamily. [4Fe-4S] cluster is required as a cofactor.

The enzyme catalyses Couples ATP hydrolysis with the unwinding of duplex DNA at the replication fork by translocating in the 5'-3' direction. This creates two antiparallel DNA single strands (ssDNA). The leading ssDNA polymer is the template for DNA polymerase III holoenzyme which synthesizes a continuous strand.. It catalyses the reaction ATP + H2O = ADP + phosphate + H(+). Functionally, DNA-dependent ATPase and 5'-3' DNA helicase. Unwinds D-loops, R-loops, forked DNA and G-quadruplex DNA. The polypeptide is ATP-dependent DNA helicase DinG (Shigella flexneri).